The sequence spans 185 residues: Ribosome-recycling factor (185 aa).

A disordered region spans residues 128–158 (VRNTRQDANNKVKKLEKDKEISEDESKKAQE).

It belongs to the RRF family.

It is found in the cytoplasm. Functionally, responsible for the release of ribosomes from messenger RNA at the termination of protein biosynthesis. May increase the efficiency of translation by recycling ribosomes from one round of translation to another. This chain is Ribosome-recycling factor, found in Helicobacter pylori (strain J99 / ATCC 700824) (Campylobacter pylori J99).